The primary structure comprises 205 residues: High frequency lysogenization protein HflD homolog (205 aa).

Belongs to the HflD family.

The protein resides in the cytoplasm. Its subcellular location is the cell inner membrane. The chain is High frequency lysogenization protein HflD homolog from Shewanella baltica (strain OS185).